A 687-amino-acid chain; its full sequence is Glycine--tRNA ligase beta subunit (687 aa).

This sequence belongs to the class-II aminoacyl-tRNA synthetase family. As to quaternary structure, tetramer of two alpha and two beta subunits.

Its subcellular location is the cytoplasm. It catalyses the reaction tRNA(Gly) + glycine + ATP = glycyl-tRNA(Gly) + AMP + diphosphate. In Neisseria gonorrhoeae (strain NCCP11945), this protein is Glycine--tRNA ligase beta subunit.